The primary structure comprises 906 residues: Envelope glycoprotein B (906 aa).

The signal sequence occupies residues 1-31; it reads MESRIWCLVVCVNLCIVCLGAAVSSSSTSHA. Low complexity predominate over residues 29-46; that stretch reads SHATSSTHNGSHTSRTTS. The disordered stretch occupies residues 29 to 51; sequence SHATSSTHNGSHTSRTTSAQTRS. At 32-750 the chain is on the virion surface side; it reads TSSTHNGSHT…EGVATFLKNP (719 aa). N-linked (GlcNAc...) asparagine; by host glycans are attached at residues Asn37, Asn68, Asn73, and Asn85. Intrachain disulfides connect Cys94-Cys550, Cys111-Cys506, Cys185-Cys250, Cys246-Cys250, and Cys344-Cys391. The involved in fusion and/or binding to host membrane stretch occupies residues 152 to 158; sequence SYAYIYT. Residue Asn208 is glycosylated (N-linked (GlcNAc...) asparagine; by host). An involved in fusion and/or binding to host membrane region spans residues 237 to 244; that stretch reads GSTWLYRE. Residues Asn281, Asn286, Asn302, Asn341, Asn383, Asn405, Asn409, Asn417, Asn447, Asn452, Asn464, Asn465, Asn554, and Asn585 are each glycosylated (N-linked (GlcNAc...) asparagine; by host). Cys573 and Cys610 are oxidised to a cystine. Hydrophobic membrane proximal region regions lie at residues 696–748 and 727–747; these read VEDK…TFLK and VAIGAVGGAVASVVEGVATFL. A helical transmembrane segment spans residues 751–771; the sequence is FGAFTIILVAIAVVIITYLIY. Residues 772-906 lie on the Intravirion side of the membrane; that stretch reads TRQRRLCTQP…LKDSDEEENV (135 aa). Polar residues-rich tracts occupy residues 797–809 and 859–876; these read VTSGSTKDTSLQA and RAQQNGTDSLDGQTGTQD. Disordered stretches follow at residues 797 to 837 and 856 to 906; these read VTSG…TAAP and AEQR…EENV. A compositionally biased stretch (basic and acidic residues) spans 877-886; sequence KGQKPNLLDR. Residues 894-897 carry the Internalization motif motif; it reads YRHL.

It belongs to the herpesviridae glycoprotein B family. As to quaternary structure, homotrimer; disulfide-linked. Binds to heparan sulfate proteoglycans. Interacts with gH/gL heterodimer. Interacts with host TLR1 and TLR2. Interacts with host C-type lectin CD209/DC-SIGN. Interacts with host ITGB1, EGFR, and PDGFRA. Post-translationally, a proteolytic cleavage by host furin generates two subunits that remain linked by disulfide bonds.

The protein localises to the virion membrane. It is found in the host cell membrane. It localises to the host endosome membrane. The protein resides in the host Golgi apparatus membrane. Envelope glycoprotein that plays a role in host cell entry, cell to-cell virus transmission, and fusion of infected cells. May be involved in the initial attachment via binding to heparan sulfate together with the gM/gN complex that binds heparin with higher affinity. Interacts with host integrin ITGB1, PDGFRA and EGFR that likely serve as postattachment entry receptors. Also participates in the fusion of viral and cellular membranes leading to virus entry into the host cell. Membrane fusion is mediated by the fusion machinery composed at least of gB and the heterodimer gH/gL. This Human cytomegalovirus (strain AD169) (HHV-5) protein is Envelope glycoprotein B.